The sequence spans 329 residues: Centromere protein L (329 aa).

Phosphoserine occurs at positions 40 and 54.

It belongs to the CENP-L/IML3 family. As to quaternary structure, component of the CENPA-CAD complex, composed of CENPI, CENPK, CENPL, CENPO, CENPP, CENPQ, CENPR and CENPS. The CENPA-CAD complex interacts with the CENPA-NAC complex, at least composed of CENPA, CENPC, CENPH, CENPM, CENPN, CENPT and CENPU.

Its subcellular location is the nucleus. It localises to the chromosome. It is found in the centromere. Functionally, component of the CENPA-CAD (nucleosome distal) complex, a complex recruited to centromeres which is involved in assembly of kinetochore proteins, mitotic progression and chromosome segregation. May be involved in incorporation of newly synthesized CENPA into centromeres via its interaction with the CENPA-NAC complex. The polypeptide is Centromere protein L (Cenpl) (Mus musculus (Mouse)).